We begin with the raw amino-acid sequence, 248 residues long: UPF0246 protein RPR_00055 (248 aa).

It belongs to the UPF0246 family.

This Rickettsia peacockii (strain Rustic) protein is UPF0246 protein RPR_00055.